Consider the following 157-residue polypeptide: 3-hydroxyacyl-[acyl-carrier-protein] dehydratase FabZ (157 aa).

His-58 is an active-site residue.

The protein belongs to the thioester dehydratase family. FabZ subfamily.

It localises to the cytoplasm. The enzyme catalyses a (3R)-hydroxyacyl-[ACP] = a (2E)-enoyl-[ACP] + H2O. Functionally, involved in unsaturated fatty acids biosynthesis. Catalyzes the dehydration of short chain beta-hydroxyacyl-ACPs and long chain saturated and unsaturated beta-hydroxyacyl-ACPs. The chain is 3-hydroxyacyl-[acyl-carrier-protein] dehydratase FabZ from Brucella ovis (strain ATCC 25840 / 63/290 / NCTC 10512).